The following is a 373-amino-acid chain: MESFAVAAAQLGPHFAPLSNGSVVDKVTPDMAHLISPYWNQFPAMDPIWAKILTAYMIMIGMISWCGNGVVIYIFATTKSLRTPANLLVINLAISDFGIMITNTPMMGINLYFETWVLGPMMCDIYAGLGSAFGCSSIWSMCMISLDRYQVIVKGMAGRPMTIPLALGKIAYIWFMSSIWCLAPAFGWSRYVPEGNLTSCGIDYLERDWNPRSYLIFYSIFVYYIPLFLICYSYWFIIAAVSAHEKAMREQAKKMNVKSLRSSEDAEKSAEGKLAKVALVTITLWFMAWTPYLVINCMGLFKFEGLTPLNTIWGACFAKSAACYNPIVYGISHPKYRLALKEKCPCCVFGKVDDGKSSDAQSQATASEAESKA.

At 1–49 the chain is on the extracellular side; sequence MESFAVAAAQLGPHFAPLSNGSVVDKVTPDMAHLISPYWNQFPAMDPIW. A glycan (N-linked (GlcNAc...) asparagine) is linked at Asn-20. The helical transmembrane segment at 50-74 threads the bilayer; sequence AKILTAYMIMIGMISWCGNGVVIYI. The Cytoplasmic segment spans residues 75 to 86; it reads FATTKSLRTPAN. A helical transmembrane segment spans residues 87–112; that stretch reads LLVINLAISDFGIMITNTPMMGINLY. The Extracellular portion of the chain corresponds to 113 to 126; that stretch reads FETWVLGPMMCDIY. A disulfide bridge connects residues Cys-123 and Cys-200. The chain crosses the membrane as a helical span at residues 127 to 146; that stretch reads AGLGSAFGCSSIWSMCMISL. Over 147 to 165 the chain is Cytoplasmic; it reads DRYQVIVKGMAGRPMTIPL. A helical membrane pass occupies residues 166–189; sequence ALGKIAYIWFMSSIWCLAPAFGWS. The Extracellular segment spans residues 190–213; sequence RYVPEGNLTSCGIDYLERDWNPRS. A glycan (N-linked (GlcNAc...) asparagine) is linked at Asn-196. The helical transmembrane segment at 214–241 threads the bilayer; that stretch reads YLIFYSIFVYYIPLFLICYSYWFIIAAV. Residues 242–276 are Cytoplasmic-facing; it reads SAHEKAMREQAKKMNVKSLRSSEDAEKSAEGKLAK. A helical membrane pass occupies residues 277–300; it reads VALVTITLWFMAWTPYLVINCMGL. At 301-307 the chain is on the extracellular side; it reads FKFEGLT. The chain crosses the membrane as a helical span at residues 308–332; it reads PLNTIWGACFAKSAACYNPIVYGIS. At Lys-319 the chain carries N6-(retinylidene)lysine. Topologically, residues 333 to 373 are cytoplasmic; the sequence is HPKYRLALKEKCPCCVFGKVDDGKSSDAQSQATASEAESKA. The tract at residues 354–373 is disordered; that stretch reads DGKSSDAQSQATASEAESKA. The span at 358 to 373 shows a compositional bias: low complexity; that stretch reads SDAQSQATASEAESKA.

The protein belongs to the G-protein coupled receptor 1 family. Opsin subfamily. Post-translationally, phosphorylated on some or all of the serine and threonine residues present in the C-terminal region.

The protein resides in the cell projection. Its subcellular location is the rhabdomere membrane. Visual pigments are the light-absorbing molecules that mediate vision. They consist of an apoprotein, opsin, covalently linked to cis-retinal. The chain is Opsin Rh1 (ninaE) from Drosophila melanogaster (Fruit fly).